The sequence spans 129 residues: Large ribosomal subunit protein bL12 (129 aa).

Belongs to the bacterial ribosomal protein bL12 family. In terms of assembly, homodimer. Part of the ribosomal stalk of the 50S ribosomal subunit. Forms a multimeric L10(L12)X complex, where L10 forms an elongated spine to which 2 to 4 L12 dimers bind in a sequential fashion. Binds GTP-bound translation factors.

Functionally, forms part of the ribosomal stalk which helps the ribosome interact with GTP-bound translation factors. Is thus essential for accurate translation. The polypeptide is Large ribosomal subunit protein bL12 (Pseudothermotoga lettingae (strain ATCC BAA-301 / DSM 14385 / NBRC 107922 / TMO) (Thermotoga lettingae)).